Consider the following 249-residue polypeptide: MPRYRLTIEYDGRPYNGFQAQASQPSVQGAIEAAVKAFTGQTIRIAAAGRTDTGVHATAQVVHVDLERDWPAETVMNALNAHLVREAISVLDAVVVSDDWHARFSANERRYLYRILNRRAPPALERGKVWHVKKPIDADAMQTAAQALVGLHDFTTFRDMACQAKSPLKTLDVARVSRVGDEVHLVFEARSFLHRQVRSMTGTLAEVGVGRWTADDVMAALEARDRTACGPVAPADGLYLTGVGYEGEG.

Asp52 acts as the Nucleophile in catalysis. Tyr111 is a binding site for substrate.

This sequence belongs to the tRNA pseudouridine synthase TruA family. As to quaternary structure, homodimer.

The catalysed reaction is uridine(38/39/40) in tRNA = pseudouridine(38/39/40) in tRNA. Its function is as follows. Formation of pseudouridine at positions 38, 39 and 40 in the anticodon stem and loop of transfer RNAs. This chain is tRNA pseudouridine synthase A, found in Caulobacter sp. (strain K31).